The sequence spans 613 residues: ATP-dependent RNA helicase DeaD (613 aa).

The Q motif motif lies at 5 to 33; that stretch reads ITFNDLGLPEFILKAVSDLGFETPSPIQQ. Residues 36 to 207 enclose the Helicase ATP-binding domain; it reads IPHLLNGNDV…KRFMNDPQEV (172 aa). Position 49-56 (49-56) interacts with ATP; it reads AQTGSGKT. The DEAD box signature appears at 155 to 158; sequence DEAD. The Helicase C-terminal domain occupies 231–378; it reads KNEALLRFLE…EVELPNHLVL (148 aa). Disordered regions lie at residues 434–476 and 552–613; these read ILPP…PQPM and AVKS…RSSF. Composition is skewed to basic and acidic residues over residues 440-469 and 556-613; these read PMEK…ERKG and DNSR…RSSF.

The protein belongs to the DEAD box helicase family. DeaD/CsdA subfamily.

The protein resides in the cytoplasm. The catalysed reaction is ATP + H2O = ADP + phosphate + H(+). Functionally, DEAD-box RNA helicase involved in various cellular processes at low temperature, including ribosome biogenesis, mRNA degradation and translation initiation. The chain is ATP-dependent RNA helicase DeaD from Haemophilus influenzae (strain ATCC 51907 / DSM 11121 / KW20 / Rd).